Reading from the N-terminus, the 178-residue chain is Large ribosomal subunit protein uL6 (178 aa).

This sequence belongs to the universal ribosomal protein uL6 family. As to quaternary structure, part of the 50S ribosomal subunit.

This protein binds to the 23S rRNA, and is important in its secondary structure. It is located near the subunit interface in the base of the L7/L12 stalk, and near the tRNA binding site of the peptidyltransferase center. The protein is Large ribosomal subunit protein uL6 of Staphylococcus epidermidis (strain ATCC 35984 / DSM 28319 / BCRC 17069 / CCUG 31568 / BM 3577 / RP62A).